The primary structure comprises 244 residues: THO complex subunit 4A (244 aa).

The disordered stretch occupies residues 1-82 (MSTGLDMSLD…EDHRSGRSSA (82 aa)). At Ser2 the chain carries N-acetylserine. Positions 21-35 (GGAGPARGTGSGSGP) are enriched in gly residues. Residues 67-77 (MFSDRSEDHRS) are compositionally biased toward basic and acidic residues. The region spanning 88 to 165 (TKLYISNLDY…KPMKIEIVGT (78 aa)) is the RRM domain. Positions 169–244 (TAAAPSGRPA…KYHSGDMETN (76 aa)) are disordered. Gly residues predominate over residues 187 to 211 (WRGGQGRGGQQRGGGRGGGGRGGGG). The span at 220 to 244 (PAEKISAEDLDADLDKYHSGDMETN) shows a compositional bias: basic and acidic residues.

It belongs to the ALYREF family.

It is found in the nucleus. It localises to the nucleoplasm. The protein resides in the nucleolus. In terms of biological role, export adapter involved in nuclear export of spliced and unspliced mRNA. The protein is THO complex subunit 4A (ALY1) of Arabidopsis thaliana (Mouse-ear cress).